The sequence spans 1074 residues: Probable arabinosyltransferase C (1074 aa).

10 consecutive transmembrane segments (helical) span residues 15 to 37 (ARLV…PLLP), 214 to 236 (LLKL…ALHV), 251 to 273 (SRWW…WHFV), 415 to 437 (IIIG…ALLV), 452 to 474 (RFGY…FLIF), 516 to 538 (SVAR…AMTL), 573 to 595 (THQF…VAVT), 608 to 630 (FGAA…WYVS), 645 to 667 (FGFT…WFHF), and 684 to 706 (LLVA…SLTL).

It belongs to the emb family.

It is found in the cell membrane. Arabinosyl transferase responsible for the polymerization of arabinose into the arabinan of arabinogalactan. The polypeptide is Probable arabinosyltransferase C (embC) (Mycolicibacterium smegmatis (Mycobacterium smegmatis)).